A 503-amino-acid chain; its full sequence is D-alanine--D-alanyl carrier protein ligase (503 aa).

Position 151–152 (151–152) interacts with ATP; it reads TS. Residue Asp-196 coordinates D-alanine. 291-296 is a binding site for ATP; it reads NTYGPT. Position 300 (Val-300) interacts with D-alanine. Residues Asp-382 and Lys-491 each coordinate ATP. Lys-491 is a binding site for D-alanine.

It belongs to the ATP-dependent AMP-binding enzyme family. DltA subfamily.

The protein resides in the cytoplasm. The enzyme catalyses holo-[D-alanyl-carrier protein] + D-alanine + ATP = D-alanyl-[D-alanyl-carrier protein] + AMP + diphosphate. The protein operates within cell wall biogenesis; lipoteichoic acid biosynthesis. Its function is as follows. Catalyzes the first step in the D-alanylation of lipoteichoic acid (LTA), the activation of D-alanine and its transfer onto the D-alanyl carrier protein (Dcp) DltC. In an ATP-dependent two-step reaction, forms a high energy D-alanyl-AMP intermediate, followed by transfer of the D-alanyl residue as a thiol ester to the phosphopantheinyl prosthetic group of the Dcp. D-alanylation of LTA plays an important role in modulating the properties of the cell wall in Gram-positive bacteria, influencing the net charge of the cell wall. The protein is D-alanine--D-alanyl carrier protein ligase of Bacillus velezensis (strain DSM 23117 / BGSC 10A6 / LMG 26770 / FZB42) (Bacillus amyloliquefaciens subsp. plantarum).